A 434-amino-acid chain; its full sequence is Septin-7 (434 aa).

Y27 carries the phosphotyrosine modification. The 270-residue stretch at 44–313 (RGFEFTLMVV…ENYRSRKLAA (270 aa)) folds into the Septin-type G domain. Residues 44-314 (RGFEFTLMVV…NYRSRKLAAV (271 aa)) form an interaction with SEPTIN12 region. The G1 motif stretch occupies residues 54–61 (GESGLGKS). Residue 54–61 (GESGLGKS) participates in GTP binding. Phosphoserine is present on S74. GTP-binding positions include T87, G113, and 192 to 200 (KADTLTPEE). A G3 motif region spans residues 110–113 (DTPG). Residues 191 to 194 (AKAD) form a G4 motif region. T225 is subject to Phosphothreonine. GTP contacts are provided by G247 and R262. The stretch at 329-434 (TKSPLAQMEE…EKNKKKGKIF (106 aa)) forms a coiled coil. S331 carries the post-translational modification Phosphoserine. K370 bears the N6-acetyllysine mark. Basic and acidic residues predominate over residues 377–407 (QRRHEQMKKNLEAQHKGLEEKRRQFEDEKAN). The segment at 377–434 (QRRHEQMKKNLEAQHKGLEEKRRQFEDEKANWEAQQRILEQQNSSRTLEKNKKKGKIF) is disordered. Position 421 is a phosphoserine (S421). T423 is subject to Phosphothreonine.

The protein belongs to the TRAFAC class TrmE-Era-EngA-EngB-Septin-like GTPase superfamily. Septin GTPase family. As to quaternary structure, septins polymerize into heterooligomeric protein complexes that form filaments, and associate with cellular membranes, actin filaments and microtubules. GTPase activity is required for filament formation. Filaments are assembled from asymmetrical heterotrimers, composed of SEPTIN2, SEPTIN6 and SEPTIN7 that associate head-to-head to form a hexameric unit. Within the trimer, directly interacts with SEPTIN6, while interaction with SEPTIN2 seems indirect. In the absence of SEPTIN6, forms homodimers. Interacts directly with CENPE and links CENPE to septin filaments composed of SEPTIN2, SEPTIN6 and SEPTIN7. Interacts with SEPTIN5, SEPTIN8, SEPTIN9 and SEPTIN11. Component of a septin core octameric complex consisting of SEPTIN12, SEPTIN7, SEPTIN6 and SEPTIN2 or SEPTIN4 in the order 12-7-6-2-2-6-7-12 or 12-7-6-4-4-6-7-12 and located in the sperm annulus; the SEPTIN12:SEPTIN7 association is mediated by the respective GTP-binding domains.

It localises to the cytoplasm. Its subcellular location is the chromosome. It is found in the centromere. The protein localises to the kinetochore. The protein resides in the cytoskeleton. It localises to the spindle. Its subcellular location is the cleavage furrow. It is found in the midbody. The protein localises to the cilium axoneme. The protein resides in the cell projection. It localises to the cilium. Its subcellular location is the flagellum. Filament-forming cytoskeletal GTPase. Required for normal organization of the actin cytoskeleton. Required for normal progress through mitosis. Involved in cytokinesis. Required for normal association of CENPE with the kinetochore. Plays a role in ciliogenesis and collective cell movements. Forms a filamentous structure with SEPTIN12, SEPTIN6, SEPTIN2 and probably SEPTIN4 at the sperm annulus which is required for the structural integrity and motility of the sperm tail during postmeiotic differentiation. The polypeptide is Septin-7 (Pan troglodytes (Chimpanzee)).